Reading from the N-terminus, the 459-residue chain is Cysteine--tRNA ligase (459 aa).

C28 contacts Zn(2+). The 'HIGH' region motif lies at 30–40; the sequence is VTVYDLCHIGH. Positions 209, 234, and 238 each coordinate Zn(2+). Positions 266 to 270 match the 'KMSKS' region motif; sequence KMSKS. Residue K269 coordinates ATP.

It belongs to the class-I aminoacyl-tRNA synthetase family. As to quaternary structure, monomer. Zn(2+) is required as a cofactor.

The protein localises to the cytoplasm. The enzyme catalyses tRNA(Cys) + L-cysteine + ATP = L-cysteinyl-tRNA(Cys) + AMP + diphosphate. This Haemophilus influenzae (strain 86-028NP) protein is Cysteine--tRNA ligase.